Consider the following 511-residue polypeptide: Maturase K (511 aa).

This sequence belongs to the intron maturase 2 family. MatK subfamily.

Its subcellular location is the plastid. The protein resides in the chloroplast. Usually encoded in the trnK tRNA gene intron. Probably assists in splicing its own and other chloroplast group II introns. This Brachypodium distachyon (Purple false brome) protein is Maturase K.